A 307-amino-acid polypeptide reads, in one-letter code: Olfactory receptor 5M3 (307 aa).

The Extracellular portion of the chain corresponds to 1–23 (MLNFTDVTEFILLGLTSRREWQV). A glycan (N-linked (GlcNAc...) asparagine) is linked at asparagine 3. The helical transmembrane segment at 24-44 (LFFIIFLVVYIITMVGNIGMM) threads the bilayer. Topologically, residues 45 to 52 (VLIKVSPQ) are cytoplasmic. A helical transmembrane segment spans residues 53–73 (LNNPMYFFLSHLSFVDVWFSS). At 74–97 (NVTPKMLENLLSDKKTITYAGCLV) the chain is on the extracellular side. A disulfide bridge links cysteine 95 with cysteine 187. The helical transmembrane segment at 98 to 118 (QCFFFIALVHVEIFILAAMAF) threads the bilayer. Over 119 to 137 (DRYMAIGNPLLYGSKMSRV) the chain is Cytoplasmic. A helical transmembrane segment spans residues 138–158 (VCIRLITFPYIYGFLTSLAAT). At 159 to 194 (LWTYGLYFCGKIEINHFYCADPPLIKMACAGTFVKE) the chain is on the extracellular side. A helical membrane pass occupies residues 195-215 (YTMIILAGINFTYSLTVIIIS). At 216–235 (YLFILIAILRMRSAEGRQKA) the chain is on the cytoplasmic side. The chain crosses the membrane as a helical span at residues 236 to 256 (FSTCGSHLTAVIIFYGTLIFM). The Extracellular segment spans residues 257–269 (YLRRPTEESVEQG). The chain crosses the membrane as a helical span at residues 270–290 (KMVAVFYTTVIPMLNPMIYSL). Topologically, residues 291-307 (RNKDVKKAMMKVISRSC) are cytoplasmic.

The protein belongs to the G-protein coupled receptor 1 family.

It localises to the cell membrane. Its function is as follows. Odorant receptor. The polypeptide is Olfactory receptor 5M3 (OR5M3) (Homo sapiens (Human)).